We begin with the raw amino-acid sequence, 161 residues long: Ribosome maturation factor RimP (161 aa).

It belongs to the RimP family.

It is found in the cytoplasm. Functionally, required for maturation of 30S ribosomal subunits. The sequence is that of Ribosome maturation factor RimP from Pelobacter propionicus (strain DSM 2379 / NBRC 103807 / OttBd1).